Reading from the N-terminus, the 130-residue chain is Ribosome-binding factor A (130 aa).

The protein belongs to the RbfA family. Monomer. Binds 30S ribosomal subunits, but not 50S ribosomal subunits or 70S ribosomes.

It is found in the cytoplasm. In terms of biological role, one of several proteins that assist in the late maturation steps of the functional core of the 30S ribosomal subunit. Associates with free 30S ribosomal subunits (but not with 30S subunits that are part of 70S ribosomes or polysomes). Required for efficient processing of 16S rRNA. May interact with the 5'-terminal helix region of 16S rRNA. In Flavobacterium johnsoniae (strain ATCC 17061 / DSM 2064 / JCM 8514 / BCRC 14874 / CCUG 350202 / NBRC 14942 / NCIMB 11054 / UW101) (Cytophaga johnsonae), this protein is Ribosome-binding factor A.